Here is a 1996-residue protein sequence, read N- to C-terminus: Non-reducing polyketide synthase atnG (1996 aa).

Positions 9–245 (FLFGDQADAP…AELPAFGAVH (237 aa)) are N-terminal acylcarrier protein transacylase (SAT) domain. A Ketosynthase family 3 (KS3) domain is found at 366-794 (SGSVAVIGMS…GGNSCFVLEE (429 aa)). Active-site for beta-ketoacyl synthase activity residues include C538, H673, and H713. Residues 891–1150 (AFAFTGQGAH…VKYTQAISHC (260 aa)) form a malonyl-CoA:ACP transacylase (MAT) domain region. S982 serves as the catalytic For acyl/malonyl transferase activity. An N-terminal hotdog fold region spans residues 1263–1392 (HHLVSQDDNG…CCIRQTDEQD (130 aa)). The PKS/mFAS DH domain maps to 1263–1569 (HHLVSQDDNG…FRKMPRTTLH (307 aa)). The product template (PT) domain stretch occupies residues 1267 to 1568 (SQDDNGKEQS…RFRKMPRTTL (302 aa)). Catalysis depends on H1295, which acts as the Proton acceptor; for dehydratase activity. A C-terminal hotdog fold region spans residues 1416–1569 (ASGIANRFQG…FRKMPRTTLH (154 aa)). The active-site Proton donor; for dehydratase activity is D1481. The tract at residues 1573–1621 (GKAVPPKPAKETSHPSVEATAPATTNGRSSATNAQAEAPAPPVNGSNGH) is disordered. Polar residues predominate over residues 1594–1607 (PATTNGRSSATNAQ). Residues 1620–1697 (GHRKTVESVL…DAQRQLRTLE (78 aa)) enclose the Carrier domain. S1657 carries the post-translational modification O-(pantetheine 4'-phosphoryl)serine. The tract at residues 1725–1923 (KRECNVVLMQ…ERTFVVWAKK (199 aa)) is thioesterase (TE) domain.

Its pathway is secondary metabolite biosynthesis; terpenoid biosynthesis. Non-reducing polyketide synthase; part of the gene cluster that mediates the biosynthesis of the meroterpenoids arthripenoids. The pathway begins with the HR-PKS atnH that catalyzes two chain-extension steps to form a reduced triketide, which then primes the SAT domain in the NR-PKS atnG to initiate three more cycles of extension to give a linear hexaketide corresponding to the polyketide part of arthripenoids. The FAD-dependent monooxygenase atnJ then performs an oxidative decarboxylation at C11 of the atnH/atnG product, via an electrophilic aromatic hydroxylation with concomitant ipso-decarboxylation. The membrane-bound polyprenyl transferase atnF then introduces a farnesyl group before the FAD-dependent monooxygenase atnK functions as the first epoxidase on terminal C12'-C13' olefin, followed by a second epoxidation on C7'-C8' catalyzed by atnA. The terpene cyclase/mutase atnI then initiates the sequential tricyclic ring formation through protonation of the terminal epoxide and catalyzes the regioselective and stereoselective 6/6/6-tricyclic ring formation. The cytochrome P450 monooxygenase atnM is responsible for hydroxylating both C1' and C10'. The next steps may involve ketoreduction and acetyl transfer by the ketoreductase atnB and the acetyltransferase atnC, and lead to the production of arthripenoid B, the final biosynthetic product of the atn cluster. The hydroquinone moiety in arthripenoid B is prone to undergo spontaneous oxidation to afford a benzoquinone compound, a key intermediate for generating structure diversity. For instance, addition of a cysteine followed by ring contraction gives arthripenoid A, tautomerization gives the main product arthripenoid C, addition of a molecular of water or amine affords arthripenoid D or E, respectively, and loss of one water forms arthripenoid F. The chain is Non-reducing polyketide synthase atnG from Arthrinium sp.